Consider the following 395-residue polypeptide: S-adenosylmethionine synthase (395 aa).

Glu10 is a binding site for Mg(2+). His16 lines the ATP pocket. Glu44 serves as a coordination point for K(+). 2 residues coordinate L-methionine: Glu57 and Gln100. Residues 168–170, 236–239, 253–254, Ala270, Lys274, and Lys278 each bind ATP; these read DGK, SGRF, and RK. Residue Lys278 participates in L-methionine binding.

This sequence belongs to the AdoMet synthase family. Homotetramer. Mn(2+) is required as a cofactor. The cofactor is Mg(2+). It depends on Co(2+) as a cofactor. K(+) serves as cofactor.

It is found in the cytoplasm. The enzyme catalyses L-methionine + ATP + H2O = S-adenosyl-L-methionine + phosphate + diphosphate. It functions in the pathway amino-acid biosynthesis; S-adenosyl-L-methionine biosynthesis; S-adenosyl-L-methionine from L-methionine: step 1/1. Catalyzes the formation of S-adenosylmethionine from methionine and ATP. The reaction comprises two steps that are both catalyzed by the same enzyme: formation of S-adenosylmethionine (AdoMet) and triphosphate, and subsequent hydrolysis of the triphosphate. The chain is S-adenosylmethionine synthase (METK) from Populus deltoides (Eastern poplar).